The chain runs to 341 residues: Mitochondrial glutathione transporter SLC25A40 (341 aa).

3 Solcar repeats span residues 14–132 (ITPS…LRDI), 140–224 (RAEI…VKQS), and 234–328 (PTFA…GKSF). Helical transmembrane passes span 20-40 (MIAS…LDVV), 104-124 (LWSG…IYFT), 143-163 (IASL…ISPL), 200-221 (WGPT…YELV), 236-256 (FAIS…VTLP), and 299-319 (GLFA…AIMI).

This sequence belongs to the mitochondrial carrier (TC 2.A.29) family.

It localises to the mitochondrion inner membrane. It catalyses the reaction glutathione(in) = glutathione(out). Functionally, probable mitochondrial transporter required for glutathione import into mitochondria. Glutathione, which plays key roles in oxidative metabolism, is produced exclusively in the cytosol and is imported in many organelles. Mitochondrial glutathione is required for the activity and stability of proteins containing iron-sulfur clusters. This chain is Mitochondrial glutathione transporter SLC25A40, found in Xenopus tropicalis (Western clawed frog).